The sequence spans 727 residues: DNA topoisomerase 3 (727 aa).

Positions 3 to 136 (KTVVLAEKPS…IKRLWISSVT (134 aa)) constitute a Toprim domain. Positions 9 and 105 each coordinate Mg(2+). The 441-residue stretch at 153-593 (YENLYHSAVA…DMKAYAHQTV (441 aa)) folds into the Topo IA-type catalytic domain. The interval 187 to 192 (SCGRVQ) is interaction with DNA. Tyr310 functions as the O-(5'-phospho-DNA)-tyrosine intermediate in the catalytic mechanism. Over residues 685–699 (KRKNKDKARATKRDV) the composition is skewed to basic and acidic residues. The tract at residues 685–714 (KRKNKDKARATKRDVSSYMKKQNKDEPINN) is disordered.

It belongs to the type IA topoisomerase family. Requires Mg(2+) as cofactor.

It catalyses the reaction ATP-independent breakage of single-stranded DNA, followed by passage and rejoining.. Releases the supercoiling and torsional tension of DNA, which is introduced during the DNA replication and transcription, by transiently cleaving and rejoining one strand of the DNA duplex. Introduces a single-strand break via transesterification at a target site in duplex DNA. The scissile phosphodiester is attacked by the catalytic tyrosine of the enzyme, resulting in the formation of a DNA-(5'-phosphotyrosyl)-enzyme intermediate and the expulsion of a 3'-OH DNA strand. The free DNA strand then undergoes passage around the unbroken strand, thus removing DNA supercoils. Finally, in the religation step, the DNA 3'-OH attacks the covalent intermediate to expel the active-site tyrosine and restore the DNA phosphodiester backbone. The sequence is that of DNA topoisomerase 3 from Bacillus subtilis (strain 168).